The chain runs to 273 residues: MATAARLLPKIQSPASPAVAEARRRRPSSLRLGVTSGPARTLKQKLVAKSAVSVVEGENAFDGVKQDTRPIIVIDNYDSFTYNLCQYMGEVGANFEVYRNDDITVEEIKKISPRGILISPGPGTPQDSGISLQTVQDLGPSTPLFGVCMGLQCIGEAFGGKVVRSPYGVVHGKGSLVHYEEKLDGTLFSGLPNPFQAGRYHSLVIEKDSFPHDALEITAWTDDGLIMAARHRKYKHIQGVQFHPESIITTEGRLMVKNFIKIIEGYEALNCLP.

The transit peptide at 1-47 (MATAARLLPKIQSPASPAVAEARRRRPSSLRLGVTSGPARTLKQKLV) directs the protein to the chloroplast. The segment at 15 to 35 (ASPAVAEARRRRPSSLRLGVT) is disordered. One can recognise a Glutamine amidotransferase type-1 domain in the interval 70-269 (PIIVIDNYDS…IKIIEGYEAL (200 aa)). 121–123 (GPG) lines the L-glutamine pocket. The active-site Nucleophile is the Cys-148. L-glutamine contacts are provided by residues Gln-152 and 202-203 (SL). Residues His-243 and Glu-245 contribute to the active site.

As to quaternary structure, heterotetramer consisting of two non-identical subunits: a beta subunit and a large alpha subunit. In terms of tissue distribution, expressed in roots and leaves.

The protein localises to the plastid. It is found in the chloroplast. The catalysed reaction is chorismate + L-glutamine = anthranilate + pyruvate + L-glutamate + H(+). Its pathway is amino-acid biosynthesis; L-tryptophan biosynthesis; L-tryptophan from chorismate: step 1/5. In terms of biological role, part of a heterotetrameric complex that catalyzes the two-step biosynthesis of anthranilate, an intermediate in the biosynthesis of L-tryptophan. In the first step, the glutamine-binding beta subunit of anthranilate synthase (AS) provides the glutamine amidotransferase activity which generates ammonia as a substrate that, along with chorismate, is used in the second step, catalyzed by the large alpha subunit of AS to produce anthranilate. The protein is Anthranilate synthase beta subunit 2, chloroplastic of Oryza sativa subsp. japonica (Rice).